The primary structure comprises 174 residues: Ribosome maturation factor RimM (174 aa).

Residues 96–169 (EPDTYYDHQL…ILEIDPPDGL (74 aa)) form the PRC barrel domain.

This sequence belongs to the RimM family. In terms of assembly, binds ribosomal protein uS19.

It localises to the cytoplasm. Its function is as follows. An accessory protein needed during the final step in the assembly of 30S ribosomal subunit, possibly for assembly of the head region. Essential for efficient processing of 16S rRNA. May be needed both before and after RbfA during the maturation of 16S rRNA. It has affinity for free ribosomal 30S subunits but not for 70S ribosomes. In Mycobacterium marinum (strain ATCC BAA-535 / M), this protein is Ribosome maturation factor RimM.